Here is a 143-residue protein sequence, read N- to C-terminus: Nucleoside diphosphate kinase (143 aa).

The ATP site is built by Lys11, Phe59, Arg87, Thr93, Arg104, and Asn114. His117 (pros-phosphohistidine intermediate) is an active-site residue.

Belongs to the NDK family. In terms of assembly, homotetramer. It depends on Mg(2+) as a cofactor.

Its subcellular location is the cytoplasm. The enzyme catalyses a 2'-deoxyribonucleoside 5'-diphosphate + ATP = a 2'-deoxyribonucleoside 5'-triphosphate + ADP. The catalysed reaction is a ribonucleoside 5'-diphosphate + ATP = a ribonucleoside 5'-triphosphate + ADP. Major role in the synthesis of nucleoside triphosphates other than ATP. The ATP gamma phosphate is transferred to the NDP beta phosphate via a ping-pong mechanism, using a phosphorylated active-site intermediate. In Alcanivorax borkumensis (strain ATCC 700651 / DSM 11573 / NCIMB 13689 / SK2), this protein is Nucleoside diphosphate kinase.